We begin with the raw amino-acid sequence, 212 residues long: dITP/XTP pyrophosphatase (212 aa).

7–12 (SRNKKK) provides a ligand contact to substrate. Asp72 serves as the catalytic Proton acceptor. A Mg(2+)-binding site is contributed by Asp72. Substrate contacts are provided by residues Ser73, 163–166 (FGYD), Lys187, and 192–193 (HR). The disordered stretch occupies residues 164–194 (GYDPLFEPAEAPGQSSAELTPERKDELSHRG). Over residues 183–192 (TPERKDELSH) the composition is skewed to basic and acidic residues.

Belongs to the HAM1 NTPase family. In terms of assembly, homodimer. Mg(2+) serves as cofactor.

The catalysed reaction is XTP + H2O = XMP + diphosphate + H(+). It catalyses the reaction dITP + H2O = dIMP + diphosphate + H(+). It carries out the reaction ITP + H2O = IMP + diphosphate + H(+). In terms of biological role, pyrophosphatase that catalyzes the hydrolysis of nucleoside triphosphates to their monophosphate derivatives, with a high preference for the non-canonical purine nucleotides XTP (xanthosine triphosphate), dITP (deoxyinosine triphosphate) and ITP. Seems to function as a house-cleaning enzyme that removes non-canonical purine nucleotides from the nucleotide pool, thus preventing their incorporation into DNA/RNA and avoiding chromosomal lesions. This Corynebacterium urealyticum (strain ATCC 43042 / DSM 7109) protein is dITP/XTP pyrophosphatase.